We begin with the raw amino-acid sequence, 251 residues long: Phosphate import ATP-binding protein PstB 2 (251 aa).

Positions 5–246 constitute an ABC transporter domain; it reads ITSKDVHLSY…PKKQITSDYL (242 aa). An ATP-binding site is contributed by 37-44; it reads GPSGCGKS.

This sequence belongs to the ABC transporter superfamily. Phosphate importer (TC 3.A.1.7) family. As to quaternary structure, the complex is composed of two ATP-binding proteins (PstB), two transmembrane proteins (PstC and PstA) and a solute-binding protein (PstS).

It localises to the cell membrane. The catalysed reaction is phosphate(out) + ATP + H2O = ADP + 2 phosphate(in) + H(+). In terms of biological role, part of the ABC transporter complex PstSACB involved in phosphate import. Responsible for energy coupling to the transport system. The protein is Phosphate import ATP-binding protein PstB 2 of Lactobacillus johnsonii (strain CNCM I-12250 / La1 / NCC 533).